The following is a 413-amino-acid chain: Argininosuccinate synthase (413 aa).

22 to 30 (AYSGGLDTS) serves as a coordination point for ATP. Residues tyrosine 100 and serine 105 each contribute to the L-citrulline site. Glycine 130 serves as a coordination point for ATP. The L-aspartate site is built by threonine 132, asparagine 136, and aspartate 137. Asparagine 136 contributes to the L-citrulline binding site. Residues arginine 140, serine 189, serine 198, glutamate 274, and tyrosine 286 each contribute to the L-citrulline site.

This sequence belongs to the argininosuccinate synthase family. Type 1 subfamily. Homotetramer.

The protein resides in the cytoplasm. It carries out the reaction L-citrulline + L-aspartate + ATP = 2-(N(omega)-L-arginino)succinate + AMP + diphosphate + H(+). It functions in the pathway amino-acid biosynthesis; L-arginine biosynthesis; L-arginine from L-ornithine and carbamoyl phosphate: step 2/3. This Endomicrobium trichonymphae protein is Argininosuccinate synthase.